A 412-amino-acid chain; its full sequence is Tyrosine--tRNA ligase (412 aa).

L-tyrosine is bound at residue Tyr41. The 'HIGH' region motif lies at 46-55 (ATADSLHVGH). The L-tyrosine site is built by Tyr174 and Gln178. Positions 234–238 (KMGKS) match the 'KMSKS' region motif. Residue Lys237 participates in ATP binding. Positions 348-411 (LSLTDLLLEH…KKQHLHLRLE (64 aa)) constitute an S4 RNA-binding domain.

It belongs to the class-I aminoacyl-tRNA synthetase family. TyrS type 1 subfamily. Homodimer.

The protein localises to the cytoplasm. It catalyses the reaction tRNA(Tyr) + L-tyrosine + ATP = L-tyrosyl-tRNA(Tyr) + AMP + diphosphate + H(+). Catalyzes the attachment of tyrosine to tRNA(Tyr) in a two-step reaction: tyrosine is first activated by ATP to form Tyr-AMP and then transferred to the acceptor end of tRNA(Tyr). The protein is Tyrosine--tRNA ligase of Pseudomonas aeruginosa (strain LESB58).